Here is a 35-residue protein sequence, read N- to C-terminus: Augerpeptide hheTx4 (35 aa).

Contains 4 disulfide bonds. As to expression, expressed by the venom duct.

It is found in the secreted. In Hastula hectica (Sea snail), this protein is Augerpeptide hheTx4.